The chain runs to 250 residues: 5-oxoprolinase subunit A (250 aa).

This sequence belongs to the LamB/PxpA family. In terms of assembly, forms a complex composed of PxpA, PxpB and PxpC.

It catalyses the reaction 5-oxo-L-proline + ATP + 2 H2O = L-glutamate + ADP + phosphate + H(+). Catalyzes the cleavage of 5-oxoproline to form L-glutamate coupled to the hydrolysis of ATP to ADP and inorganic phosphate. The protein is 5-oxoprolinase subunit A of Staphylococcus aureus (strain Mu3 / ATCC 700698).